Consider the following 407-residue polypeptide: uncharacterized protein (407 aa).

12 helical membrane-spanning segments follow: residues 22 to 42 (IVSVVSFTFICYLTIGLPLAV), 51 to 71 (LGFSAIVAGAAISVQYFATLA), 101 to 121 (ALLLSAFAFARWPAASIGLLV), 126 to 146 (VLGIGESLVGTGAILWGIGRV), 154 to 174 (VISWNGIATYGALAIGAPVGV), 179 to 199 (ALIPAVLGMLVIALAALGYYL), 227 to 247 (GLGLALGSAGFGSIATFITLY), 258 to 278 (LSLTVFGTLFIGARLLFANTI), 286 to 306 (VAIVSFAFECAGLLMLWLAPV), 309 to 329 (VALVGAALTGFGFALIFPALG), 347 to 367 (AYSVFLDLSLGITGPLAGYVA), and 369 to 389 (AFGYPQVFLCAAVAAAAGVAL).

It belongs to the major facilitator superfamily. YhhS family.

Its subcellular location is the cell inner membrane. This is an uncharacterized protein from Burkholderia mallei (strain NCTC 10229).